The following is a 237-amino-acid chain: Pyridoxal 5'-phosphate synthase subunit PdxS (237 aa).

Lys-19 functions as the Schiff-base intermediate with D-ribose 5-phosphate in the catalytic mechanism. Residue Gly-91 coordinates D-ribose 5-phosphate. Arg-103 contributes to the D-glyceraldehyde 3-phosphate binding site. D-ribose 5-phosphate contacts are provided by residues Gly-157 and 178-179 (GS).

The protein belongs to the PdxS/SNZ family. In the presence of PdxT, forms a dodecamer of heterodimers.

The catalysed reaction is aldehydo-D-ribose 5-phosphate + D-glyceraldehyde 3-phosphate + L-glutamine = pyridoxal 5'-phosphate + L-glutamate + phosphate + 3 H2O + H(+). It functions in the pathway cofactor biosynthesis; pyridoxal 5'-phosphate biosynthesis. Functionally, catalyzes the formation of pyridoxal 5'-phosphate from ribose 5-phosphate (RBP), glyceraldehyde 3-phosphate (G3P) and ammonia. The ammonia is provided by the PdxT subunit. Can also use ribulose 5-phosphate and dihydroxyacetone phosphate as substrates, resulting from enzyme-catalyzed isomerization of RBP and G3P, respectively. The polypeptide is Pyridoxal 5'-phosphate synthase subunit PdxS (Methanococcus vannielii).